We begin with the raw amino-acid sequence, 504 residues long: UDP-N-acetylmuramoylalanine--D-glutamate ligase (504 aa).

Residue 129-135 (GTNGKTT) coordinates ATP.

The protein belongs to the MurCDEF family.

The protein resides in the cytoplasm. The catalysed reaction is UDP-N-acetyl-alpha-D-muramoyl-L-alanine + D-glutamate + ATP = UDP-N-acetyl-alpha-D-muramoyl-L-alanyl-D-glutamate + ADP + phosphate + H(+). The protein operates within cell wall biogenesis; peptidoglycan biosynthesis. In terms of biological role, cell wall formation. Catalyzes the addition of glutamate to the nucleotide precursor UDP-N-acetylmuramoyl-L-alanine (UMA). In Burkholderia pseudomallei (strain 668), this protein is UDP-N-acetylmuramoylalanine--D-glutamate ligase.